Here is a 354-residue protein sequence, read N- to C-terminus: Cysteine proteinase A (354 aa).

A signal peptide spans 1–24 (MARRNPLLFAIVVTILFVVCYGSA). Positions 25-125 (LIAQTPPPVD…HKEDVHVDDS (101 aa)) are cleaved as a propeptide — activation peptide. Cystine bridges form between Cys-150/Cys-191, Cys-184/Cys-229, and Cys-282/Cys-330. Cys-153 is an active-site residue. N-linked (GlcNAc...) asparagine glycosylation occurs at Asn-208. Residues His-289 and Asn-309 contribute to the active site.

The protein belongs to the peptidase C1 family.

This Leishmania mexicana protein is Cysteine proteinase A (LMCPA).